Reading from the N-terminus, the 206-residue chain is Oligoribonuclease (206 aa).

The Exonuclease domain occupies 20–183 (LVWLDMEMTG…ADIHESIDEL (164 aa)). Y141 is an active-site residue.

Belongs to the oligoribonuclease family.

Its subcellular location is the cytoplasm. 3'-to-5' exoribonuclease specific for small oligoribonucleotides. In Burkholderia ambifaria (strain ATCC BAA-244 / DSM 16087 / CCUG 44356 / LMG 19182 / AMMD) (Burkholderia cepacia (strain AMMD)), this protein is Oligoribonuclease.